The primary structure comprises 343 residues: D-alanine--D-alanine ligase (343 aa).

In terms of domain architecture, ATP-grasp spans 129 to 335; that stretch reads KYVLENFGVK…YGELISEIIE (207 aa). 162–217 is a binding site for ATP; sequence ENKLGYDVFIKPSNSGSSVGISKAHNREELEAGLEEALKFDRKVLVEVALNAREIE. The Mg(2+) site is built by aspartate 288, glutamate 302, and asparagine 304.

This sequence belongs to the D-alanine--D-alanine ligase family. It depends on Mg(2+) as a cofactor. Mn(2+) is required as a cofactor.

It localises to the cytoplasm. It carries out the reaction 2 D-alanine + ATP = D-alanyl-D-alanine + ADP + phosphate + H(+). The protein operates within cell wall biogenesis; peptidoglycan biosynthesis. Functionally, cell wall formation. The protein is D-alanine--D-alanine ligase of Clostridium novyi (strain NT).